The following is an 88-amino-acid chain: Exodeoxyribonuclease 7 small subunit (88 aa).

Belongs to the XseB family. Heterooligomer composed of large and small subunits.

The protein resides in the cytoplasm. The catalysed reaction is Exonucleolytic cleavage in either 5'- to 3'- or 3'- to 5'-direction to yield nucleoside 5'-phosphates.. Bidirectionally degrades single-stranded DNA into large acid-insoluble oligonucleotides, which are then degraded further into small acid-soluble oligonucleotides. This is Exodeoxyribonuclease 7 small subunit from Bordetella petrii (strain ATCC BAA-461 / DSM 12804 / CCUG 43448).